The following is a 379-amino-acid chain: Forkhead box protein F1 (379 aa).

The segment at 1–45 (MSSAPEKQQPPHGGGGGGGGGGGAAMDPASSGPSKAKKTNAGIRR) is disordered. The segment covering 12–24 (HGGGGGGGGGGGA) has biased composition (gly residues). The fork-head DNA-binding region spans 47–138 (EKPPYSYIAL…EFMFEEGSFR (92 aa)).

As to expression, expressed in lung and placenta.

Its subcellular location is the nucleus. Functionally, probable transcription activator for a number of lung-specific genes. The polypeptide is Forkhead box protein F1 (FOXF1) (Homo sapiens (Human)).